The chain runs to 411 residues: Protein phosphatase 1 regulatory subunit 36 (411 aa).

Interacts with PPP1CA.

In terms of biological role, inhibits phosphatase activity of protein phosphatase 1 (PP1) complexes. In Rattus norvegicus (Rat), this protein is Protein phosphatase 1 regulatory subunit 36 (Ppp1r36).